Here is a 320-residue protein sequence, read N- to C-terminus: Nicotianamine synthase 1 (320 aa).

The protein belongs to the nicotianamine synthase (NAS)-like family. In shoots and roots.

The catalysed reaction is 3 S-adenosyl-L-methionine = nicotianamine + 3 S-methyl-5'-thioadenosine + 3 H(+). Synthesizes nicotianamine, a polyamine which serves as a sensor for the physiological iron status within the plant, and/or might be involved in the transport of iron. In Arabidopsis thaliana (Mouse-ear cress), this protein is Nicotianamine synthase 1 (NAS1).